The following is a 179-amino-acid chain: Large ribosomal subunit protein uL5 (179 aa).

It belongs to the universal ribosomal protein uL5 family. As to quaternary structure, part of the 50S ribosomal subunit; part of the 5S rRNA/L5/L18/L25 subcomplex. Contacts the 5S rRNA and the P site tRNA. Forms a bridge to the 30S subunit in the 70S ribosome.

Functionally, this is one of the proteins that bind and probably mediate the attachment of the 5S RNA into the large ribosomal subunit, where it forms part of the central protuberance. In the 70S ribosome it contacts protein S13 of the 30S subunit (bridge B1b), connecting the 2 subunits; this bridge is implicated in subunit movement. Contacts the P site tRNA; the 5S rRNA and some of its associated proteins might help stabilize positioning of ribosome-bound tRNAs. This is Large ribosomal subunit protein uL5 from Pseudomonas putida (strain W619).